Reading from the N-terminus, the 285-residue chain is Bifunctional protein FolD 2 (285 aa).

Residues 164–166, S189, and V230 contribute to the NADP(+) site; that span reads GRS.

It belongs to the tetrahydrofolate dehydrogenase/cyclohydrolase family. As to quaternary structure, homodimer.

It catalyses the reaction (6R)-5,10-methylene-5,6,7,8-tetrahydrofolate + NADP(+) = (6R)-5,10-methenyltetrahydrofolate + NADPH. The catalysed reaction is (6R)-5,10-methenyltetrahydrofolate + H2O = (6R)-10-formyltetrahydrofolate + H(+). Its pathway is one-carbon metabolism; tetrahydrofolate interconversion. In terms of biological role, catalyzes the oxidation of 5,10-methylenetetrahydrofolate to 5,10-methenyltetrahydrofolate and then the hydrolysis of 5,10-methenyltetrahydrofolate to 10-formyltetrahydrofolate. This is Bifunctional protein FolD 2 from Geobacter sulfurreducens (strain ATCC 51573 / DSM 12127 / PCA).